Reading from the N-terminus, the 749-residue chain is MLSYFIPTAKGLAPLLEVELKEMGIENPQQMNGGVKFEGTLEQGYKVCLWSRFASRVLLKLSEFKVLDSMDLYLGCSNIPWETHFDVDKTFSIDFSGTNDEIRNTQFGALKIKDAIVDRFRKHFDERPNVQKRDADIRFNGRLWKDKATIYLDLSGSPLHLRGYRTIAGEAPLRETLAAGIIKRSGWQGEALLDPMCGSGTLVIEAAMMALNIAPGSLRETFGFEKWKKHDQECWQTLKTSAQVYGRRAVNQCETRFYGSDLSKDMIEIARKNAQRAGVGEVIEFSVTDAKKVLPPEELETGMLITNPPYGERLGSFSDTITLYTELGYHFKDAFAGWNLSMFAMDTELLSCLGMRAGKSFKFFNGPIECVLKNYRISPKRPAVEVEPVAPKKTNKETPEPINPWTMGQNESVVEAAIENESELVFKEVQQIKPAIYAEEFANRLLKNLKQLEKWAKREGVECYRLYDADLPEYNVAIDRYAEYIIIQEYRAPKEIETQKVRRRFLDVVSTVRYVLNLPDDKLVIKVRERQKGRQQYEKLDTKKQSLVVHEGQAKMLVNLQDYLDTGLFLDHRPTRLLIGNMAKGKDFLNLFCYTATASVHAALGGAKSTTSVDMSKTYLAWGEDNFAENGIKGKHEFIQQDCIKWLQHAHEMYDLIFIDPPTFSNSKRMNDVFDVQEDHVALLTSASQRLNKQGEIIFSNNKRGFKLDVDAIKALGFYIKDISQSSIPEDFRRNKKIHQCWILTKHTD.

Residues 43-154 form the THUMP domain; it reads QGYKVCLWSR…KDKATIYLDL (112 aa). The interval 386 to 406 is disordered; the sequence is VEPVAPKKTNKETPEPINPWT.

The protein belongs to the methyltransferase superfamily. RlmKL family.

The protein resides in the cytoplasm. It carries out the reaction guanosine(2445) in 23S rRNA + S-adenosyl-L-methionine = N(2)-methylguanosine(2445) in 23S rRNA + S-adenosyl-L-homocysteine + H(+). It catalyses the reaction guanosine(2069) in 23S rRNA + S-adenosyl-L-methionine = N(2)-methylguanosine(2069) in 23S rRNA + S-adenosyl-L-homocysteine + H(+). Specifically methylates the guanine in position 2445 (m2G2445) and the guanine in position 2069 (m7G2069) of 23S rRNA. The chain is Ribosomal RNA large subunit methyltransferase K/L from Psychromonas ingrahamii (strain DSM 17664 / CCUG 51855 / 37).